The following is a 420-amino-acid chain: Glycogen synthase kinase-3 beta (420 aa).

Over residues M1–A22 the composition is skewed to polar residues. The disordered stretch occupies residues M1–E53. S9 carries the phosphoserine; by PKB/AKT1, RPS6KA3 and SGK3 modification. C14 is lipidated: S-palmitoyl cysteine. Residues Y56–F340 form the Protein kinase domain. Residues I62–V70 and K85 contribute to the ATP site. D181 functions as the Proton acceptor in the catalytic mechanism. At Y216 the chain carries Phosphotyrosine. A compositionally biased stretch (low complexity) spans A386–N401. A disordered region spans residues A386–T420. At S389 the chain carries Phosphoserine. Phosphothreonine is present on residues T390 and T402. The span at N409 to T420 shows a compositional bias: low complexity.

This sequence belongs to the protein kinase superfamily. CMGC Ser/Thr protein kinase family. GSK-3 subfamily. As to quaternary structure, monomer. Interacts with ARRB2, DISC1 and ZBED3. Interacts with CABYR, MMP2, MUC1, NIN and PRUNE1. Interacts with AXIN1; the interaction mediates hyperphosphorylation of CTNNB1 leading to its ubiquitination and destruction. Interacts with and phosphorylates SNAI1. Interacts with DNM1L (via a C-terminal domain). Found in a complex composed of MACF1, APC, AXIN1, CTNNB1 and GSK3B. Interacts with SGK3. Interacts with DAB2IP (via C2 domain); the interaction stimulates GSK3B kinase activation. Interacts (via C2 domain) with PPP2CA. Interacts with the CLOCK-BMAL1 heterodimer. Interacts with the BMAL1. Interacts with CTNND2. Interacts with NCYM. The complex composed, at least, of APC, CTNNB1 and GSK3B interacts with JPT1; the interaction requires the inactive form of GSK3B (phosphorylated at 'Ser-9'). Forms a complex composed of PRKAR2A or PRKAR2B, GSK3B and GSKIP through GSKIP interaction; facilitates PKA-induced phosphorylation and regulates GSK3B activity. Interacts with GSKIP. Interacts with GID8. Interacts with PIWIL2. Interacts with LMBR1L. Interacts with DDX3X. Interacts with BIRC2. Interacts with TNFRSF10B; TNFRSF10B stimulation inhibits GSK3B kinase activity. Interacts with RICTOR; the interaction results in phosphorylation of RICTOR at 'Thr-1695' by GSK3B which facilitates FBXW7-mediated ubiquitination and subsequent degradation of RICTOR. Found in a complex with SLC39A6, SLC39A10 and with GSK3B that controls NCAM1 phosphorylation. Interacts with PKP3 (via ARM repeats); the interaction may be involved in PKP3 protein degradation. In terms of processing, phosphorylated by AKT1 and ILK1. Upon insulin-mediated signaling, the activated PKB/AKT1 protein kinase phosphorylates and deactivates GSK3B, resulting in the dephosphorylation and activation of GYS1. Activated by phosphorylation at Tyr-216. Inactivated by phosphorylation at Ser-9. Phosphorylated in a circadian manner in the hippocampus. Post-translationally, mono-ADP-ribosylation by PARP10 negatively regulates kinase activity. Palmitoylated. Palmitoylation by ZDHHC4 prevents AKT1-mediated phosphorylation. Expressed in testis, thymus, prostate and ovary and weakly expressed in lung, brain and kidney. Colocalizes with EIF2AK2/PKR and TAU in the Alzheimer disease (AD) brain.

It is found in the cytoplasm. The protein resides in the nucleus. Its subcellular location is the cell membrane. It carries out the reaction L-seryl-[tau protein] + ATP = O-phospho-L-seryl-[tau protein] + ADP + H(+). The catalysed reaction is L-threonyl-[tau protein] + ATP = O-phospho-L-threonyl-[tau protein] + ADP + H(+). The enzyme catalyses L-seryl-[protein] + ATP = O-phospho-L-seryl-[protein] + ADP + H(+). It catalyses the reaction L-threonyl-[protein] + ATP = O-phospho-L-threonyl-[protein] + ADP + H(+). Activated by phosphorylation at Tyr-216. In response to insulin, inhibited by phosphorylation at Ser-9 by PKB/AKT1 and RPS6KA3; phosphorylation at this site causes a conformational change, preventing access of substrates to the active site. Inhibited by IL22 treatment which also triggers phosphorylation at Ser-9, promoting inactivation. Inhibited by lithium. Functionally, constitutively active protein kinase that acts as a negative regulator in the hormonal control of glucose homeostasis, Wnt signaling and regulation of transcription factors and microtubules, by phosphorylating and inactivating glycogen synthase (GYS1 or GYS2), EIF2B, CTNNB1/beta-catenin, APC, AXIN1, DPYSL2/CRMP2, JUN, NFATC1/NFATC, MAPT/TAU and MACF1. Requires primed phosphorylation of the majority of its substrates. In skeletal muscle, contributes to insulin regulation of glycogen synthesis by phosphorylating and inhibiting GYS1 activity and hence glycogen synthesis. May also mediate the development of insulin resistance by regulating activation of transcription factors. Regulates protein synthesis by controlling the activity of initiation factor 2B (EIF2BE/EIF2B5) in the same manner as glycogen synthase. In Wnt signaling, GSK3B forms a multimeric complex with APC, AXIN1 and CTNNB1/beta-catenin and phosphorylates the N-terminus of CTNNB1 leading to its degradation mediated by ubiquitin/proteasomes. Phosphorylates JUN at sites proximal to its DNA-binding domain, thereby reducing its affinity for DNA. Phosphorylates NFATC1/NFATC on conserved serine residues promoting NFATC1/NFATC nuclear export, shutting off NFATC1/NFATC gene regulation, and thereby opposing the action of calcineurin. Phosphorylates MAPT/TAU on 'Thr-548', decreasing significantly MAPT/TAU ability to bind and stabilize microtubules. MAPT/TAU is the principal component of neurofibrillary tangles in Alzheimer disease. Plays an important role in ERBB2-dependent stabilization of microtubules at the cell cortex. Phosphorylates MACF1, inhibiting its binding to microtubules which is critical for its role in bulge stem cell migration and skin wound repair. Probably regulates NF-kappa-B (NFKB1) at the transcriptional level and is required for the NF-kappa-B-mediated anti-apoptotic response to TNF-alpha (TNF/TNFA). Negatively regulates replication in pancreatic beta-cells, resulting in apoptosis, loss of beta-cells and diabetes. Through phosphorylation of the anti-apoptotic protein MCL1, may control cell apoptosis in response to growth factors deprivation. Phosphorylates MUC1 in breast cancer cells, decreasing the interaction of MUC1 with CTNNB1/beta-catenin. Is necessary for the establishment of neuronal polarity and axon outgrowth. Phosphorylates MARK2, leading to inhibition of its activity. Phosphorylates SIK1 at 'Thr-182', leading to sustainment of its activity. Phosphorylates ZC3HAV1 which enhances its antiviral activity. Phosphorylates SNAI1, leading to its ubiquitination and proteasomal degradation. Phosphorylates SFPQ at 'Thr-687' upon T-cell activation. Phosphorylates NR1D1 st 'Ser-55' and 'Ser-59' and stabilizes it by protecting it from proteasomal degradation. Regulates the circadian clock via phosphorylation of the major clock components including BMAL1, CLOCK and PER2. Phosphorylates FBXL2 at 'Thr-404' and primes it for ubiquitination by the SCF(FBXO3) complex and proteasomal degradation. Phosphorylates CLOCK AT 'Ser-427' and targets it for proteasomal degradation. Phosphorylates BMAL1 at 'Ser-17' and 'Ser-21' and primes it for ubiquitination and proteasomal degradation. Phosphorylates OGT at 'Ser-3' or 'Ser-4' which positively regulates its activity. Phosphorylates MYCN in neuroblastoma cells which may promote its degradation. Regulates the circadian rhythmicity of hippocampal long-term potentiation and BMAL1 and PER2 expression. Acts as a regulator of autophagy by mediating phosphorylation of KAT5/TIP60 under starvation conditions, activating KAT5/TIP60 acetyltransferase activity and promoting acetylation of key autophagy regulators, such as ULK1 and RUBCNL/Pacer. Negatively regulates extrinsic apoptotic signaling pathway via death domain receptors. Promotes the formation of an anti-apoptotic complex, made of DDX3X, BRIC2 and GSK3B, at death receptors, including TNFRSF10B. The anti-apoptotic function is most effective with weak apoptotic signals and can be overcome by stronger stimulation. Phosphorylates E2F1, promoting the interaction between E2F1 and USP11, stabilizing E2F1 and promoting its activity. Phosphorylates mTORC2 complex component RICTOR at 'Ser-1235' in response to endoplasmic stress, inhibiting mTORC2. Phosphorylates mTORC2 complex component RICTOR at 'Thr-1695' which facilitates FBXW7-mediated ubiquitination and subsequent degradation of RICTOR. Phosphorylates FXR1, promoting FXR1 ubiquitination by the SCF(FBXO4) complex and FXR1 degradation by the proteasome. Phosphorylates interleukin-22 receptor subunit IL22RA1, preventing its proteasomal degradation. This chain is Glycogen synthase kinase-3 beta, found in Homo sapiens (Human).